The primary structure comprises 247 residues: Fasciclin-like arabinogalactan protein 6 (247 aa).

An N-terminal signal peptide occupies residues 1 to 23; that stretch reads MSSSLFSYVVLLIFLFTIPYIQS. Residues 36–182 form the FAS1 domain; it reads PINLTAILEA…LAVYVVDSVL (147 aa). 5 N-linked (GlcNAc...) asparagine glycosylation sites follow: N38, N57, N70, N142, and N153. Positions 192–212 are enriched in low complexity; it reads TTPTGAPAPKSSTSSSDADSP. Residues 192–221 form a disordered region; that stretch reads TTPTGAPAPKSSTSSSDADSPAADDEHKSA. The GPI-anchor amidated glycine moiety is linked to residue G222. A propeptide spans 223–247 (removed in mature form); sequence SSVKRTSLGIVVSFALFCCSVIYIA.

It belongs to the fasciclin-like AGP family.

The protein localises to the cell membrane. May be a cell surface adhesion protein. The chain is Fasciclin-like arabinogalactan protein 6 (FLA6) from Arabidopsis thaliana (Mouse-ear cress).